Consider the following 108-residue polypeptide: MSAVNAQTKYDEGRLMQVLVAPIVSEKATMIAEKSNSVTFKVLQDATKYEIKAAVELMFKVNVKAVAVLNIKGKTKRFGKSVGRRDNLRKAYVTLQAGQELNLGGESA.

The protein belongs to the universal ribosomal protein uL23 family. Part of the 50S ribosomal subunit. Contacts protein L29, and trigger factor when it is bound to the ribosome.

One of the early assembly proteins it binds 23S rRNA. One of the proteins that surrounds the polypeptide exit tunnel on the outside of the ribosome. Forms the main docking site for trigger factor binding to the ribosome. The sequence is that of Large ribosomal subunit protein uL23 from Polaromonas naphthalenivorans (strain CJ2).